Here is a 492-residue protein sequence, read N- to C-terminus: Protein PAIR1 (492 aa).

A coiled-coil region spans residues 166-186; the sequence is VDSVQSDVMQLNRAMKEASLD. A Nuclear localization signal motif is present at residues 479-483; sequence KRRRR.

In terms of assembly, interacts with CRC1. In terms of tissue distribution, expressed in reproductive organs, but not in vegetative organs.

The protein localises to the nucleus. Its function is as follows. Involved in spore formation. Plays an essential role in the establishment of homologous chromosome pairing in early meiosis. This is Protein PAIR1 (PAIR1) from Oryza sativa subsp. japonica (Rice).